We begin with the raw amino-acid sequence, 86 residues long: Class II hydrophobin 2 (86 aa).

Residues 1–15 form the signal peptide; it reads MQFFAVALFATSALA. Disulfide bonds link cysteine 18-cysteine 67, cysteine 28-cysteine 58, cysteine 29-cysteine 41, and cysteine 68-cysteine 79.

It belongs to the cerato-ulmin hydrophobin family. Homodimer. Homodimers further self-assemble to form highly ordered films at water-air interfaces through intermolecular interactions.

The protein localises to the secreted. It localises to the spore wall. The protein resides in the cell wall. In terms of biological role, aerial growth, conidiation, and dispersal of filamentous fungi in the environment rely upon a capability of their secreting small amphipathic proteins called hydrophobins (HPBs) with low sequence identity. Class I can self-assemble into an outermost layer of rodlet bundles on aerial cell surfaces, conferring cellular hydrophobicity that supports fungal growth, development and dispersal; whereas Class II form highly ordered films at water-air interfaces through intermolecular interactions but contribute nothing to the rodlet structure. Hbf2 is a class II hydrophobin that is involved in sporuration. The sequence is that of Class II hydrophobin 2 from Hypocrea jecorina (Trichoderma reesei).